A 370-amino-acid chain; its full sequence is NADH-quinone oxidoreductase subunit D (370 aa).

Belongs to the complex I 49 kDa subunit family. In terms of assembly, NDH-1 is composed of 14 different subunits. Subunits NuoB, C, D, E, F, and G constitute the peripheral sector of the complex.

Its subcellular location is the cell membrane. The enzyme catalyses a quinone + NADH + 5 H(+)(in) = a quinol + NAD(+) + 4 H(+)(out). Its function is as follows. NDH-1 shuttles electrons from NADH, via FMN and iron-sulfur (Fe-S) centers, to quinones in the respiratory chain. The immediate electron acceptor for the enzyme in this species is believed to be a menaquinone. Couples the redox reaction to proton translocation (for every two electrons transferred, four hydrogen ions are translocated across the cytoplasmic membrane), and thus conserves the redox energy in a proton gradient. The chain is NADH-quinone oxidoreductase subunit D from Clostridium beijerinckii (strain ATCC 51743 / NCIMB 8052) (Clostridium acetobutylicum).